The chain runs to 236 residues: MKQKSWNINLEEMMQAGVHFGHQARKWNPKMASYIFTERKGIHILNLTQTARFLSEACDLLANASSKGKQVLIVGTKYQAADLVASASIKARCHYINQKWLGGMLTNWSTIEKRLQRFKDLENKEKTGVLNQLPKKEAATLKRQLVQLRKYLGGIKYMTSLPDIVIIIDQQKEITAINECITLGIPTICLVDTDCDPDLTDIPIPANDDARASIRWILNKLTLAISEGRYNSIKTE.

Belongs to the universal ribosomal protein uS2 family.

It localises to the plastid. It is found in the chloroplast. This is Small ribosomal subunit protein uS2c (rps2) from Physcomitrium patens (Spreading-leaved earth moss).